A 404-amino-acid chain; its full sequence is Acetate kinase (404 aa).

Residue asparagine 9 coordinates Mg(2+). Lysine 16 contributes to the ATP binding site. Arginine 100 is a substrate binding site. The Proton donor/acceptor role is filled by aspartate 157. Residues 215–219, 290–292, and 335–339 each bind ATP; these read HLGNG, DMR, and GIGEN. Glutamate 386 lines the Mg(2+) pocket.

The protein belongs to the acetokinase family. Homodimer. The cofactor is Mg(2+). Requires Mn(2+) as cofactor.

It is found in the cytoplasm. It catalyses the reaction acetate + ATP = acetyl phosphate + ADP. It functions in the pathway metabolic intermediate biosynthesis; acetyl-CoA biosynthesis; acetyl-CoA from acetate: step 1/2. Functionally, catalyzes the formation of acetyl phosphate from acetate and ATP. Can also catalyze the reverse reaction. The polypeptide is Acetate kinase (Methylocella silvestris (strain DSM 15510 / CIP 108128 / LMG 27833 / NCIMB 13906 / BL2)).